The chain runs to 111 residues: Phosphoribosyl-ATP pyrophosphatase (111 aa).

Belongs to the PRA-PH family.

The protein resides in the cytoplasm. It catalyses the reaction 1-(5-phospho-beta-D-ribosyl)-ATP + H2O = 1-(5-phospho-beta-D-ribosyl)-5'-AMP + diphosphate + H(+). It functions in the pathway amino-acid biosynthesis; L-histidine biosynthesis; L-histidine from 5-phospho-alpha-D-ribose 1-diphosphate: step 2/9. This is Phosphoribosyl-ATP pyrophosphatase from Pseudomonas entomophila (strain L48).